Reading from the N-terminus, the 99-residue chain is Large ribosomal subunit protein uL23 (99 aa).

This sequence belongs to the universal ribosomal protein uL23 family. Part of the 50S ribosomal subunit. Contacts protein L29, and trigger factor when it is bound to the ribosome.

Functionally, one of the early assembly proteins it binds 23S rRNA. One of the proteins that surrounds the polypeptide exit tunnel on the outside of the ribosome. Forms the main docking site for trigger factor binding to the ribosome. In Shewanella woodyi (strain ATCC 51908 / MS32), this protein is Large ribosomal subunit protein uL23.